A 744-amino-acid polypeptide reads, in one-letter code: Cell division cycle protein 27 homolog B (744 aa).

The stretch at 101–134 is one TPR 1 repeat; that stretch reads AAGHYLLGLIYKYTDRRKNAAQQFKQSLTIDPLL. A compositionally biased stretch (polar residues) spans 180 to 199; sequence NEERNSTSTKNTSSEDYSPR. Disordered regions lie at residues 180-218 and 359-390; these read NEER…NFHS and ENMD…NDQE. The span at 363 to 374 shows a compositional bias: basic and acidic residues; it reads EGVRGEPFDDSR. Over residues 375 to 387 the composition is skewed to polar residues; sequence PNTASTTGSMASN. TPR repeat units follow at residues 450–483, 518–551, 553–585, 587–619, 621–653, 655–687, and 688–721; these read GWVL…SPYC, PQSW…NPRF, YAHT…DTRH, NAWY…NPSS, VIMS…DRKN, LPMY…APSE, and SSVY…KPPA.

This sequence belongs to the APC3/CDC27 family. As to quaternary structure, the APC/C is composed of at least 10 subunits. Can homodimerize. Interacts with APC2, APC10, FZR2 and FZR3. Interacts with PANS1. Interacts with SAMBA. Specifically expressed in dividing and elongating cells.

It localises to the nucleus. The protein operates within protein modification; protein ubiquitination. Functionally, component of the anaphase promoting complex/cyclosome (APC/C), a cell cycle-regulated E3 ubiquitin-protein ligase complex that controls progression through mitosis and the G1 phase of the cell cycle. The APC/C complex controls several key steps in the cell cycle by mediating ubiquitination and subsequent degradation of target proteins such as cyclins. The APC/C complex is required for the female gametophyte development and is involved in several aspect of development by controlling cell division and cell elongation. Involved in the control of endoreduplication. Functionally redundant with CDC27A in the control of gametophyte development. The polypeptide is Cell division cycle protein 27 homolog B (CDC27B) (Arabidopsis thaliana (Mouse-ear cress)).